Here is a 154-residue protein sequence, read N- to C-terminus: Large ribosomal subunit protein uL23 (154 aa).

This sequence belongs to the universal ribosomal protein uL23 family.

In terms of biological role, this protein binds to a specific region on the 26S rRNA. The chain is Large ribosomal subunit protein uL23 (RPL23A) from Daucus carota (Wild carrot).